A 355-amino-acid polypeptide reads, in one-letter code: Diacylglycerol O-acyltransferase 2A (355 aa).

Transmembrane regions (helical) follow at residues 41–61 (LLWC…CSIP) and 62–78 (VLLW…ILVW). N-linked (GlcNAc...) asparagine glycosylation occurs at asparagine 142.

The protein belongs to the diacylglycerol acyltransferase family.

The protein resides in the endoplasmic reticulum membrane. The enzyme catalyses an acyl-CoA + a 1,2-diacyl-sn-glycerol = a triacyl-sn-glycerol + CoA. The protein operates within glycerolipid metabolism; triacylglycerol biosynthesis. Functionally, catalyzes the terminal and only committed step in triacylglycerol synthesis by using diacylglycerol and fatty acyl CoA as substrates. Required for storage lipid synthesis. This chain is Diacylglycerol O-acyltransferase 2A (DGAT2A), found in Umbelopsis ramanniana (Oleaginous fungus).